Consider the following 1375-residue polypeptide: uncharacterized protein (1375 aa).

The region spanning 277–476 is the Helicase ATP-binding domain; sequence LLASGDIRGG…FGLLFLLRYS (200 aa). 290 to 297 serves as a coordination point for ATP; sequence DEMGMGKT. The RING-type zinc-finger motif lies at 1092–1130; the sequence is CIICRDIIKQGFITTCGHLYCSFCLEAWLKHSSSCPMCK. One can recognise a Helicase C-terminal domain in the interval 1190 to 1336; sequence TISKHLLYLK…QLDKLGLDVP (147 aa).

Belongs to the SNF2/RAD54 helicase family.

It is found in the nucleus. This is an uncharacterized protein from Schizosaccharomyces pombe (strain 972 / ATCC 24843) (Fission yeast).